A 339-amino-acid chain; its full sequence is Phenylalanine--tRNA ligase alpha subunit (339 aa).

Glu-254 contacts Mg(2+).

It belongs to the class-II aminoacyl-tRNA synthetase family. Phe-tRNA synthetase alpha subunit type 1 subfamily. As to quaternary structure, tetramer of two alpha and two beta subunits. Mg(2+) serves as cofactor.

It localises to the cytoplasm. It carries out the reaction tRNA(Phe) + L-phenylalanine + ATP = L-phenylalanyl-tRNA(Phe) + AMP + diphosphate + H(+). The protein is Phenylalanine--tRNA ligase alpha subunit of Desulforudis audaxviator (strain MP104C).